A 239-amino-acid chain; its full sequence is MKINVLTLFPDMFTPLQVSMLGRGLEDGKWDLNLVNFRDFTTDVHHHVDDTPYGGGAGMVLQIMPIKKALDSLPSTGKVIITAPQGKTFNEQMAQDWAKEDELTFICGHYEGFDQRVYDLADETVSIGDYVLTGGELPTMSMIDATVRLLPGILGNAASPVEESFSHGLLEYPQYTRPADFEGQKVPEVLTSGNHQKIAEWRHKEALKATYLHRPDMLEDRQLTNEEKKMLEEIKSELD.

Residues Gly-108 and 127–132 contribute to the S-adenosyl-L-methionine site; that span reads IGDYVL.

Belongs to the RNA methyltransferase TrmD family. As to quaternary structure, homodimer.

The protein localises to the cytoplasm. The enzyme catalyses guanosine(37) in tRNA + S-adenosyl-L-methionine = N(1)-methylguanosine(37) in tRNA + S-adenosyl-L-homocysteine + H(+). Its function is as follows. Specifically methylates guanosine-37 in various tRNAs. In Lactobacillus helveticus (strain DPC 4571), this protein is tRNA (guanine-N(1)-)-methyltransferase.